Reading from the N-terminus, the 389-residue chain is 26S proteasome non-ATPase regulatory subunit 6 (389 aa).

Residues 193-361 form the PCI domain; the sequence is DFKQAAELFL…EIVETNRPDS (169 aa).

This sequence belongs to the proteasome subunit S10 family. Component of the 19S proteasome regulatory particle complex. The 26S proteasome consists of a 20S core particle (CP) and two 19S regulatory subunits (RP). The regulatory particle is made of a lid composed of 9 subunits including PSMD6, a base containing 6 ATPases and few additional components.

Its function is as follows. Component of the 26S proteasome, a multiprotein complex involved in the ATP-dependent degradation of ubiquitinated proteins. This complex plays a key role in the maintenance of protein homeostasis by removing misfolded or damaged proteins, which could impair cellular functions, and by removing proteins whose functions are no longer required. Therefore, the proteasome participates in numerous cellular processes, including cell cycle progression, apoptosis, or DNA damage repair. The chain is 26S proteasome non-ATPase regulatory subunit 6 (Psmd6) from Mus musculus (Mouse).